A 282-amino-acid polypeptide reads, in one-letter code: Ribonuclease 3 (282 aa).

The RNase III domain occupies 18–141 (FVAFFKSLNI…LVAAIYEDLG (124 aa)). Residue Glu-59 coordinates Mg(2+). Asp-63 is an active-site residue. Residues Asp-127 and Glu-130 each contribute to the Mg(2+) site. Residue Glu-130 is part of the active site.

The protein belongs to the ribonuclease III family. In terms of assembly, homodimer. Mg(2+) is required as a cofactor.

Its subcellular location is the cytoplasm. The catalysed reaction is Endonucleolytic cleavage to 5'-phosphomonoester.. Digests double-stranded RNA. Involved in the processing of primary rRNA transcript to yield the immediate precursors to the large and small rRNAs (23S and 16S). Processes some mRNAs, and tRNAs when they are encoded in the rRNA operon. Processes pre-crRNA and tracrRNA of type II CRISPR loci if present in the organism. This is Ribonuclease 3 from Mycoplasmoides pneumoniae (strain ATCC 15531 / DSM 23978 / CIP 103766 / NBRC 14401 / NCTC 10119 / FH) (Mycoplasma pneumoniae).